Reading from the N-terminus, the 265-residue chain is Shikimate dehydrogenase (NADP(+)) (265 aa).

Shikimate contacts are provided by residues 15–17 (SLS) and Thr-62. Lys-66 serves as the catalytic Proton acceptor. 2 residues coordinate shikimate: Asn-87 and Asp-102. Residues 125 to 129 (GAGGA), 149 to 154 (NRTLEK), and Leu-209 contribute to the NADP(+) site. Residue Tyr-211 participates in shikimate binding. Position 233 (Gly-233) interacts with NADP(+).

The protein belongs to the shikimate dehydrogenase family. Homodimer.

The catalysed reaction is shikimate + NADP(+) = 3-dehydroshikimate + NADPH + H(+). Its pathway is metabolic intermediate biosynthesis; chorismate biosynthesis; chorismate from D-erythrose 4-phosphate and phosphoenolpyruvate: step 4/7. In terms of biological role, involved in the biosynthesis of the chorismate, which leads to the biosynthesis of aromatic amino acids. Catalyzes the reversible NADPH linked reduction of 3-dehydroshikimate (DHSA) to yield shikimate (SA). The sequence is that of Shikimate dehydrogenase (NADP(+)) from Legionella pneumophila subsp. pneumophila (strain Philadelphia 1 / ATCC 33152 / DSM 7513).